The sequence spans 124 residues: Small ribosomal subunit protein uS12 (124 aa).

Residues 1–23 (MATINQLVRKPRKRPVAKSDVPA) form a disordered region. A 3-methylthioaspartic acid modification is found at Asp89. A disordered region spans residues 101-124 (ALDTSGVQNRRQGRSKYGTKRPKS). A compositionally biased stretch (basic residues) spans 111–124 (RQGRSKYGTKRPKS).

The protein belongs to the universal ribosomal protein uS12 family. As to quaternary structure, part of the 30S ribosomal subunit. Contacts proteins S8 and S17. May interact with IF1 in the 30S initiation complex.

With S4 and S5 plays an important role in translational accuracy. In terms of biological role, interacts with and stabilizes bases of the 16S rRNA that are involved in tRNA selection in the A site and with the mRNA backbone. Located at the interface of the 30S and 50S subunits, it traverses the body of the 30S subunit contacting proteins on the other side and probably holding the rRNA structure together. The combined cluster of proteins S8, S12 and S17 appears to hold together the shoulder and platform of the 30S subunit. The sequence is that of Small ribosomal subunit protein uS12 from Chromohalobacter salexigens (strain ATCC BAA-138 / DSM 3043 / CIP 106854 / NCIMB 13768 / 1H11).